We begin with the raw amino-acid sequence, 336 residues long: Heat-inducible transcription repressor HrcA (336 aa).

The protein belongs to the HrcA family.

In terms of biological role, negative regulator of class I heat shock genes (grpE-dnaK-dnaJ and groELS operons). Prevents heat-shock induction of these operons. This Variovorax paradoxus (strain S110) protein is Heat-inducible transcription repressor HrcA.